Here is a 217-residue protein sequence, read N- to C-terminus: Probable GTP-binding protein EngB (217 aa).

Residues 33–217 form the EngB-type G domain; it reads GPTEIAFAGR…RAAIELAVTR (185 aa). GTP contacts are provided by residues 41-48, 68-72, 95-98, 162-165, and 196-198; these read GRSNVGKS, GRTQE, DMPG, TKTD, and TSS. Positions 48 and 70 each coordinate Mg(2+).

It belongs to the TRAFAC class TrmE-Era-EngA-EngB-Septin-like GTPase superfamily. EngB GTPase family. Requires Mg(2+) as cofactor.

Necessary for normal cell division and for the maintenance of normal septation. This chain is Probable GTP-binding protein EngB, found in Rhizobium meliloti (strain 1021) (Ensifer meliloti).